The chain runs to 218 residues: Small ribosomal subunit protein uS3c (218 aa).

Positions 47–120 (VRTHIKSSSN…KLHIAIEKVA (74 aa)) constitute a KH type-2 domain.

The protein belongs to the universal ribosomal protein uS3 family. As to quaternary structure, part of the 30S ribosomal subunit.

The protein localises to the plastid. The protein resides in the chloroplast. The sequence is that of Small ribosomal subunit protein uS3c (rps3) from Picea abies (Norway spruce).